Consider the following 677-residue polypeptide: Mitochondrial 15S rRNA processing factor ppr3 (677 aa).

The N-terminal 43 residues, 1-43 (MFTEICGKLRTCIYKKVAFSRPLGCNLRQLPVFRDFHNSVSCL), are a transit peptide targeting the mitochondrion. PPR repeat units lie at residues 210–244 (SVYLLNILLHASAKHSTLEETLNVYNAYNQFQLKP), 245–279 (DNYTFVSLIIAYSLHKQIVKAFSLLSEMKRLKIEA), 280–314 (NTHVFNTYIAILYHERLYEQAWRLFDYMKFKSLQS), 317–351 (DDKTYSYMISVCTAERKVEKALNLYQEMQERPINP), 355–390 (SSRTIDAILRALARYPRYHSKFWSIFEELRAEQWKP), and 569–604 (DIHVYACAINGASVSNDFAFGYAVWLEYLHCKSYLP).

Belongs to the CCM1 family. Binds to mitochondrial small subunit 15S rRNA.

Its subcellular location is the mitochondrion. Functionally, regulates mitochondrial small subunit maturation by controlling 15S rRNA 5'-end processing. Localizes to the 5' precursor of the 15S rRNA in a position that is subsequently occupied by mS47 in the mature yeast mtSSU. Uses structure and sequence-specific RNA recognition, binding to a single-stranded region of the precursor and specifically recognizing bases -6 to -1. The exchange of Ccm1 for mS47 is coupled to the irreversible removal of precursor rRNA that is accompanied by conformational changes of the mitoribosomal proteins uS5m and mS26. These conformational changes signal completion of 5'-end rRNA processing through protection of the mature 5'-end of the 15S rRNA and stabilization of mS47. The removal of the 5' precursor together with the dissociation of Ccm1 may be catalyzed by the 5'-3' exoribonuclease Pet127. Involved in the specific removal of group I introns in mitochondrial encoded transcripts. The sequence is that of Mitochondrial 15S rRNA processing factor ppr3 (dmr1) from Schizosaccharomyces japonicus (strain yFS275 / FY16936) (Fission yeast).